A 344-amino-acid polypeptide reads, in one-letter code: MKPKFLFEQLLSRQDLSSDQMQEVIHACMTGEFSDVQIATFLALMRMKGETVNELTAAAKVMRQLAHKIDLGNPLIDIVGTGGDGRNTFNVSTACSFVVAAAGIKVAKHGNRSVSSRSGSADLLEQAGFILNLSDSQVQNCINQCQLAFLFAPHYHPAMQHARAARQQLGIRTLFNLLGPLINPAQVKRQVVGVFSTNWLKTIATVLANLGSERSLVISSQDGLDEISIAAKSEVVEYRDGNFKQWFISPEDYGLKHSSLDAIIVDSPEQSLHLIQSVLSGDSGPARDIVLLNSAAAIYCAKDGISFDAAIEEARIAIDNGKANLCFNKLRLLTQTLNKESNHE.

5-phospho-alpha-D-ribose 1-diphosphate is bound by residues glycine 80, 83-84, threonine 88, 90-93, 108-116, and serine 120; these read GD, NVST, and KHGNRSVSS. An anthranilate-binding site is contributed by glycine 80. Residue serine 92 coordinates Mg(2+). Asparagine 111 is an anthranilate binding site. Residue arginine 166 coordinates anthranilate. 2 residues coordinate Mg(2+): aspartate 225 and glutamate 226.

The protein belongs to the anthranilate phosphoribosyltransferase family. As to quaternary structure, homodimer. The cofactor is Mg(2+).

It catalyses the reaction N-(5-phospho-beta-D-ribosyl)anthranilate + diphosphate = 5-phospho-alpha-D-ribose 1-diphosphate + anthranilate. Its pathway is amino-acid biosynthesis; L-tryptophan biosynthesis; L-tryptophan from chorismate: step 2/5. Its function is as follows. Catalyzes the transfer of the phosphoribosyl group of 5-phosphorylribose-1-pyrophosphate (PRPP) to anthranilate to yield N-(5'-phosphoribosyl)-anthranilate (PRA). This chain is Anthranilate phosphoribosyltransferase, found in Legionella pneumophila (strain Lens).